We begin with the raw amino-acid sequence, 281 residues long: Putative glutamine amidotransferase-like protein RP404 (281 aa).

In terms of domain architecture, Glutamine amidotransferase type-1 spans 19 to 281 (KYTYADFPWY…KALVKASKYI (263 aa)). Residues 139–174 (RHFSKLTYSKKFECNTEAFATTVYTLPIKLEFENAP) form the RPE1 insert domain.

This is Putative glutamine amidotransferase-like protein RP404 from Rickettsia prowazekii (strain Madrid E).